A 560-amino-acid polypeptide reads, in one-letter code: Dihydroxy-acid dehydratase (560 aa).

Cysteine 52 is a [2Fe-2S] cluster binding site. Aspartate 84 is a binding site for Mg(2+). [2Fe-2S] cluster is bound at residue cysteine 125. 2 residues coordinate Mg(2+): aspartate 126 and lysine 127. N6-carboxylysine is present on lysine 127. Cysteine 197 serves as a coordination point for [2Fe-2S] cluster. Glutamate 448 contributes to the Mg(2+) binding site. Serine 474 (proton acceptor) is an active-site residue.

It belongs to the IlvD/Edd family. As to quaternary structure, homodimer. [2Fe-2S] cluster serves as cofactor. Requires Mg(2+) as cofactor.

The enzyme catalyses (2R)-2,3-dihydroxy-3-methylbutanoate = 3-methyl-2-oxobutanoate + H2O. It carries out the reaction (2R,3R)-2,3-dihydroxy-3-methylpentanoate = (S)-3-methyl-2-oxopentanoate + H2O. It participates in amino-acid biosynthesis; L-isoleucine biosynthesis; L-isoleucine from 2-oxobutanoate: step 3/4. The protein operates within amino-acid biosynthesis; L-valine biosynthesis; L-valine from pyruvate: step 3/4. In terms of biological role, functions in the biosynthesis of branched-chain amino acids. Catalyzes the dehydration of (2R,3R)-2,3-dihydroxy-3-methylpentanoate (2,3-dihydroxy-3-methylvalerate) into 2-oxo-3-methylpentanoate (2-oxo-3-methylvalerate) and of (2R)-2,3-dihydroxy-3-methylbutanoate (2,3-dihydroxyisovalerate) into 2-oxo-3-methylbutanoate (2-oxoisovalerate), the penultimate precursor to L-isoleucine and L-valine, respectively. This is Dihydroxy-acid dehydratase from Francisella tularensis subsp. tularensis (strain WY96-3418).